A 1343-amino-acid chain; its full sequence is DNA-directed RNA polymerase subunit beta (1343 aa).

The protein belongs to the RNA polymerase beta chain family. As to quaternary structure, the RNAP catalytic core consists of 2 alpha, 1 beta, 1 beta' and 1 omega subunit. When a sigma factor is associated with the core the holoenzyme is formed, which can initiate transcription.

It carries out the reaction RNA(n) + a ribonucleoside 5'-triphosphate = RNA(n+1) + diphosphate. In terms of biological role, DNA-dependent RNA polymerase catalyzes the transcription of DNA into RNA using the four ribonucleoside triphosphates as substrates. The protein is DNA-directed RNA polymerase subunit beta of Haemophilus influenzae (strain PittEE).